The primary structure comprises 508 residues: Glycogen synthase (508 aa).

ADP-alpha-D-glucose is bound at residue Lys27.

Belongs to the glycosyltransferase 1 family. Bacterial/plant glycogen synthase subfamily.

The catalysed reaction is [(1-&gt;4)-alpha-D-glucosyl](n) + ADP-alpha-D-glucose = [(1-&gt;4)-alpha-D-glucosyl](n+1) + ADP + H(+). It participates in glycan biosynthesis; glycogen biosynthesis. Its function is as follows. Synthesizes alpha-1,4-glucan chains using ADP-glucose. The chain is Glycogen synthase from Photobacterium profundum (strain SS9).